Consider the following 452-residue polypeptide: Serine carboxypeptidase-like 26 (452 aa).

The N-terminal stretch at 1 to 20 is a signal peptide; sequence MARLLLLFFFFLILLHYASC. Residues Asn52 and Asn138 are each glycosylated (N-linked (GlcNAc...) asparagine). Disulfide bonds link Cys87-Cys338, Cys244-Cys256, and Cys280-Cys306. Ser180 is a catalytic residue. An N-linked (GlcNAc...) asparagine glycan is attached at Asn327. Residues Asp375 and His427 contribute to the active site.

Belongs to the peptidase S10 family. In terms of tissue distribution, ubiquitous.

The protein localises to the secreted. Functionally, probable carboxypeptidase. This is Serine carboxypeptidase-like 26 (SCPL26) from Arabidopsis thaliana (Mouse-ear cress).